Reading from the N-terminus, the 185-residue chain is MGITHELDIFLVSEDIAMKHVELHKGNSYGCVLNIKSSCRKQMKIIFVLKPDWTEIDSIKPIQMEADGIYIDVTIIKQSFYEVIYCSNFTIYGDSVINIFSDIDRCTKEKYPIININIDKKKYEIIESGYTYIYIQSPIDKEDKLTYMRDDYVDEYNSSDDDCIDYYDCDYDDDDNNDAEDEDEE.

This sequence belongs to the poxviridae C7 protein family.

Plays a role for multiplication of the virus in different cell types. In Swinepox virus (strain Kasza) (SWPV), this protein is Probable host range protein 2.